The following is a 94-amino-acid chain: Co-chaperonin GroES (94 aa).

This sequence belongs to the GroES chaperonin family. Heptamer of 7 subunits arranged in a ring. Interacts with the chaperonin GroEL.

Its subcellular location is the cytoplasm. Its function is as follows. Together with the chaperonin GroEL, plays an essential role in assisting protein folding. The GroEL-GroES system forms a nano-cage that allows encapsulation of the non-native substrate proteins and provides a physical environment optimized to promote and accelerate protein folding. GroES binds to the apical surface of the GroEL ring, thereby capping the opening of the GroEL channel. The sequence is that of Co-chaperonin GroES from Brevibacillus choshinensis.